Reading from the N-terminus, the 73-residue chain is N-terminal-borealin-like protein (73 aa).

Belongs to the borealin family. As to quaternary structure, component of the aurora kinase complex composed of at least BIR1, BNL1, IPL1 and SLI15.

The protein localises to the nucleus. The protein resides in the cytoplasm. Its subcellular location is the cytoskeleton. It localises to the spindle. In terms of biological role, component of the aurora kinase complex, also called chromosomal passenger complex (CPC), essential for chromosome segregation and metaphase chromosome alignment. Mediates the SLI15-BIR1 interaction within the CPC. This is N-terminal-borealin-like protein (NBL1) from Saccharomyces cerevisiae (strain ATCC 204508 / S288c) (Baker's yeast).